A 266-amino-acid polypeptide reads, in one-letter code: GTP cyclohydrolase III (266 aa).

Belongs to the archaeal-type GTP cyclohydrolase family.

It carries out the reaction GTP + 3 H2O = 2-amino-5-formylamino-6-(5-phospho-D-ribosylamino)pyrimidin-4(3H)-one + 2 phosphate + 2 H(+). Its function is as follows. Catalyzes the formation of 2-amino-5-formylamino-6-ribofuranosylamino-4(3H)-pyrimidinone ribonucleotide monophosphate and inorganic phosphate from GTP. Also has an independent pyrophosphate phosphohydrolase activity. This Methanococcus maripaludis (strain C5 / ATCC BAA-1333) protein is GTP cyclohydrolase III.